The following is a 200-amino-acid chain: ATP-dependent Clp protease proteolytic subunit 3 (200 aa).

Catalysis depends on Ser101, which acts as the Nucleophile. Residue His126 is part of the active site.

Belongs to the peptidase S14 family. As to quaternary structure, fourteen ClpP subunits assemble into 2 heptameric rings which stack back to back to give a disk-like structure with a central cavity, resembling the structure of eukaryotic proteasomes.

Its subcellular location is the cytoplasm. The catalysed reaction is Hydrolysis of proteins to small peptides in the presence of ATP and magnesium. alpha-casein is the usual test substrate. In the absence of ATP, only oligopeptides shorter than five residues are hydrolyzed (such as succinyl-Leu-Tyr-|-NHMec, and Leu-Tyr-Leu-|-Tyr-Trp, in which cleavage of the -Tyr-|-Leu- and -Tyr-|-Trp bonds also occurs).. Cleaves peptides in various proteins in a process that requires ATP hydrolysis. Has a chymotrypsin-like activity. Plays a major role in the degradation of misfolded proteins. In Parasynechococcus marenigrum (strain WH8102), this protein is ATP-dependent Clp protease proteolytic subunit 3.